A 435-amino-acid polypeptide reads, in one-letter code: Chromatin structure-remodeling complex subunit RSC7 (435 aa).

A disordered region spans residues 1–97 (MSDSEGGLAS…DKGVTRSRNR (97 aa)). Residues 30 to 66 (DTEDLDIDENDENEDDDYREEEANEGVNEEEISDEEE) show a composition bias toward acidic residues. Ser-86 is subject to Phosphoserine. Positions 248–435 (ELRTKGNVIE…QNFEKCNEYI (188 aa)) are functional region; able to complement all NPL6 null allele phenotypes.

This sequence belongs to the RSC7/SWP82 family. RSC7 subfamily. In terms of assembly, interacts with ARP7, ARP9, RSC3, RSC8, RSC30 and STH1. Component of the two forms of the RSC complex composed of at least either RSC1 or RSC2, and ARP7, ARP9, LDB7, NPL6, RSC3, RSC30, RSC4, RSC58, RSC6, RSC8, RSC9, SFH1, STH1, HTL1 and probably RTT102. The complexes interact with histone and histone variant components of centromeric chromatin. Component of a fungal-specific module (HTL1-LDB7-NPL6-RSC3-RSC30) within the RSC complex.

The protein localises to the nucleus. Component of the chromatin structure remodeling complex (RSC), which is involved in transcription regulation and nucleosome positioning. RSC is responsible for the transfer of a histone octamer from a nucleosome core particle to naked DNA. The reaction requires ATP and involves an activated RSC-nucleosome intermediate. Remodeling reaction also involves DNA translocation, DNA twist and conformational change. As a reconfigurer of centromeric and flanking nucleosomes, RSC complex is required both for proper kinetochore function in chromosome segregation and, via a PKC1-dependent signaling pathway, for organization of the cellular cytoskeleton. Together with HTL1, LDB7, RSC3, RSC30 components, defines a fungal-specific module within the RSC complex that plays a role in many cellular functions including the maintenance of cell wall integrity. Acidic protein important for nuclear protein localization. In Saccharomyces cerevisiae (strain ATCC 204508 / S288c) (Baker's yeast), this protein is Chromatin structure-remodeling complex subunit RSC7 (NPL6).